Consider the following 70-residue polypeptide: Small ribosomal subunit protein bS21 (70 aa).

This sequence belongs to the bacterial ribosomal protein bS21 family.

This Methylibium petroleiphilum (strain ATCC BAA-1232 / LMG 22953 / PM1) protein is Small ribosomal subunit protein bS21.